We begin with the raw amino-acid sequence, 163 residues long: Endoribonuclease YbeY (163 aa).

3 residues coordinate Zn(2+): H121, H125, and H131.

Belongs to the endoribonuclease YbeY family. Zn(2+) is required as a cofactor.

Its subcellular location is the cytoplasm. Functionally, single strand-specific metallo-endoribonuclease involved in late-stage 70S ribosome quality control and in maturation of the 3' terminus of the 16S rRNA. The protein is Endoribonuclease YbeY of Synechococcus sp. (strain JA-3-3Ab) (Cyanobacteria bacterium Yellowstone A-Prime).